A 3085-amino-acid polypeptide reads, in one-letter code: MATMMHFGQFPSNIPLRAATCCTKVHSTLVTKEMMASSVKPAESSSVARPIIYSSAATDGYEKAQRAFEASFREKYSGKLEAMKYGKMVKKGGLTYVKRAGPQAIAKGIEMDAAIEKFNTAFNAGELENVTLEGDITAGISVARGESVWLRSVFWSRSLKKQARKKTPKLVAKSDFDDLFNKVLKVASLGNIPVEIVGKKANKILRCGYRRVNTSTIPYFHLPHHNSNYICRELHPQRVRWLVPLLVRHRKIRDQFSDSMIARGWSGLILPKYIASTCGRRYDEVIVRGRLYGRVEDARTKLPAGDVGRTMHYSSGEERFFAGWKEGFEKLVPAQKEHICKIVQDNKFCGKLAASIVQIAFPCHKMACDVCRNKFNEMTPEAYSELIDKHIDQRMNEINEAIVRFPGLKQVVSNFRSKHIASTNIKDNLEVAKLTQGHKANQMMQLARINSILIKGNTATPSEISDASGLLLEITRWFNNHLSVIDKGSLRAFRNKRSSKALVNPSLLCDNQRDKNGNFIWGERGYHSKRFFASHFDEVTPGDGYKEYIIRKGPQGQRKLAIGNLIVSFDLEKTRQALKGEEVEKLPLSNSCVSKRNGNYVYTSCCVTLDDGTPLYSNIKNPTKRHLVVGTTGDPKIVDLPATDTDKMYIAKEGYCYLNIFLAMLINVNENEAKAFTKMVRDIIIPMLGTWPTMQDLATACFMMTAFFPETSSAELPRILVDHTNQTMHVIDSFGSLTTGYHVLKAGTAAQLIDFASTELEGEMKWYRVGGHGLPVKEKMISALITSIFRPKKLVYLIEEDPYVLIMAMCSPRLIISLFNNGALELAAKHWISRDKNVSAIFAMLMDLSTEMSKAELLIEQHRMINECAKRVHDTQNYLDEVGPHQQEVRTFLALISDELEADKELHKTGFANFSERFHSLTEKMYVDALEEEWRGLSLLDRFSYATFVYKHKPRSTSVLPPKKSEDIDAKFVISPSWFVGKTKEHLSGGRKYVTSQITQFTSYIKRATLDRAMRIMCSCLKDLAYFMNVALVTHLLISMIAAVYNMLNDHRIAKRRLYILEMQETNTAIWHLYDTWKTVNQRDPTHEEFRKYVAKVNKNLLRHLPEEEDKAEVEYQANKVYEKKLEKAVALMALFTMIFDTEKSGAVFSILRNIKSVFSTLGEEVKYQSLDEIQSIEDEKKLTIDFDLDTEITAEHTTMDVQFEKWWDKQLSQNRVVPHYRVGGTFIEFTRHTAASVCNTICASSEQEFVVRGAVGSGKSTGLPSHLSRKGRVLLLEPTRPLAENVCKQLRKEPFHLSPTLRMRGLTTFGSSNISVMTSGYALHFHANNPQRLEEFDFIMIDESHTMDSSTMAFYCLLREYEFKGKILKVSATPPGRECEFKTQHDVLIKIEESLSYNSFVTAQGTGSNADVVQNGDNILVYVPSYNDVDQLSKGLMEKGHLVTKVDGRTMKMGNVEIPTKGTSSKKHFIVATNIIENGVTLDIDVVVDFGLKVVAELDSDSRCMRYKKVSISYGERLQRLGRVGRVKQGTALRIGHTETGMTEIPVAIATEAAFICFAYNLPVMTHNVTSSLLSRCTNRQARTMMQYELSPFFMVELVHFNGCVHPQIESKLKAYKLRDSETQLSTLAIPNSGTSRWKTVGEYKKLGVRIEADDNVRVPFAANGVPDRLYADLWETIQQHKSDAGFGRLTSACASKISYTLTTQPNAIPRTLAIIEHLLREEQQKKAYFESLNDTLCATSFSLAGMVNNIRRRYLKDHSAHNINVLQNAKSQLNEFNSKAIDPERVGDIMGYGVLDTVQYQSATDVQKRLKLKGRWNGSLAATDLLIAGAVFAGGCWMLWEYTKSGNEIVQYQGKRRQMQKLKFRNARDNKVGREVYGDDGTIEHFFGAAYTERGKRKGNNSTKGMGTKTRRFVHMYGFDPTEYSFVRFVDPLTGYSKDESVQTDISLVQSEIGEYRQKCMEDDDELIDFIKQKPGIQAYFMKNGSDKALQVDLTPHIPLLSCAKTATIAGFPERESELRQTGTPIVVNKNVVPGEHKEVVREEGKSIVKGLRNYNPISSVVCRLTNDSNGNAQTLYGVGFGPLIITNSHLFKMNNGTLFVRSHQGEFTVQNTTQLQIYHVKDKDMILIRMPKDFPPFPMKLKFRAPHSEERACLVGSRFQQKSLSSEVSDSTLIRPTDSGSGYWKHWVSTKEGDCGLPMVALKDGSLIGIHGLTSVRSELNYFVPFTDDFQSKYLSNIESLEWVKHWRHTPDKVAWNGMTLRENGPASEFSVSKLIADLTHGYVDEVVEQGYSSKWVANRLDGNLKAVASSSSQLVTKHVVKGPCVLFQEFLATHEEAARYFVPRMGEYGPSRLNKEAFLKDFLKYAGPITVGVVNTNSFEDAVASVINMLEDLDYGECAYVTDPDSIFDSLNMKAAVGALYKGKKKEYFEQLNTTEREDLLRLSCERLYEGKMGVWNGSLKAELRPKEKLEQNKTRTFTAAPIDTLLGGKVCVDDFNNRFYSLNLKGPWSVGMTKFYGGWNELLQKLPDGWIYCDADGSQFDSSLTPYLINAVVQIREHFMEDWEIGRTMLRNFYTEIVYTPILTPDGTIVKKFKGNNSGQPSTVVDNTLMVILAMHYAMHQQCWKEEEMKEKIRFFANGDDLLIAIYPSKEKFLNVLSEYFHELGLKYDFSSRSTVRETLWFMSHRGLYLDDMYIPKLEEERIVSILEWDRSNEATHRAEAICAAMIEAWGYPELLKYIREFYLWMMQHECYRDLVRDGKLPYIAETALRKLYTDKSVDENELVKYWKALAPEEDDGPDIVTYQGDEKPSKSSQPQSSSPQVPQQVDAGASSQGRDKQSVIKHDSTKSKDVGQSSTAVPRLKQISKMRMPVSKGRQVLALDHLLDYKPEQVDLSNTRATKEQFDNWYEAVMREYDVSDSQMGVIMNGLMVWCIENGTSPNLSGDWVMMDGEEQVSFPLKPIVENAKPSFRQIMHHFSDAAEAYIEMRNRERPYMPRYGAQRNLRDKTLARYAFDFYEVTSRTTDRAREAHFQMKAAALASVSNKLFGLDGSVATTSEDTERHTATDVNAHMHHMMGVRQG.

Residues leucine 170–tyrosine 313 form the Peptidase S30 domain. Catalysis depends on for P1 proteinase activity residues histidine 224, glutamate 233, and serine 266. An Involved in interaction with stylet and aphid transmission motif is present at residues lysine 365–cysteine 368. Positions proline 622–lysine 624 match the Involved in virions binding and aphid transmission motif. One can recognise a Peptidase C6 domain in the interval methionine 648–glycine 770. Active-site for helper component proteinase activity residues include cysteine 656 and histidine 729. The region spanning threonine 1241–glutamate 1393 is the Helicase ATP-binding domain. Glycine 1254 to serine 1261 serves as a coordination point for ATP. A DESH box motif is present at residues aspartate 1343 to histidine 1346. In terms of domain architecture, Helicase C-terminal spans aspartate 1412–threonine 1571. Residues glutamate 1895 to serine 1904 carry the Nuclear localization signal motif. Tyrosine 1919 is subject to O-(5'-phospho-RNA)-tyrosine. The Peptidase C4 domain maps to glycine 2047–glutamate 2266. Catalysis depends on for nuclear inclusion protein A activity residues histidine 2092, aspartate 2127, and cysteine 2198. Residues tryptophan 2535 to leucine 2659 form the RdRp catalytic domain. Residues aspartate 2801 to isoleucine 2869 form a disordered region. A compositionally biased stretch (low complexity) spans lysine 2816–valine 2831. Basic and acidic residues predominate over residues glycine 2839–aspartate 2855. The residue at position 3068 (threonine 3068) is a Phosphothreonine.

It belongs to the potyviridae genome polyprotein family. As to quaternary structure, interacts with host eIF4E protein (via cap-binding region); this interaction mediates the translation of the VPg-viral RNA conjugates. Part of a complex that comprises VPg, RNA, host EIF4E and EIF4G; this interaction mediates the translation of the VPg-viral RNA conjugates. VPg is uridylylated by the polymerase and is covalently attached to the 5'-end of the genomic RNA. This uridylylated form acts as a nucleotide-peptide primer for the polymerase. Post-translationally, potyviral RNA is expressed as two polyproteins which undergo post-translational proteolytic processing. Genome polyprotein is processed by NIa-pro, P1 and HC-pro proteinases resulting in the production of at least ten individual proteins. P3N-PIPO polyprotein is cleaved by P1 and HC-pro proteinases resulting in the production of three individual proteins. The P1 proteinase and the HC-pro cleave only their respective C-termini autocatalytically. 6K1 is essential for proper proteolytic separation of P3 from CI.

Its subcellular location is the host cytoplasmic vesicle. It localises to the host nucleus. The protein resides in the virion. It carries out the reaction RNA(n) + a ribonucleoside 5'-triphosphate = RNA(n+1) + diphosphate. It catalyses the reaction Hydrolyzes glutaminyl bonds, and activity is further restricted by preferences for the amino acids in P6 - P1' that vary with the species of potyvirus, e.g. Glu-Xaa-Xaa-Tyr-Xaa-Gln-|-(Ser or Gly) for the enzyme from tobacco etch virus. The natural substrate is the viral polyprotein, but other proteins and oligopeptides containing the appropriate consensus sequence are also cleaved.. The enzyme catalyses Hydrolyzes a Gly-|-Gly bond at its own C-terminus, commonly in the sequence -Tyr-Xaa-Val-Gly-|-Gly, in the processing of the potyviral polyprotein.. Required for aphid transmission and also has proteolytic activity. Only cleaves a Gly-Gly dipeptide at its own C-terminus. Interacts with virions and aphid stylets. Acts as a suppressor of RNA-mediated gene silencing, also known as post-transcriptional gene silencing (PTGS), a mechanism of plant viral defense that limits the accumulation of viral RNAs. May have RNA-binding activity. In terms of biological role, has helicase activity. It may be involved in replication. Functionally, indispensable for virus replication. Reduces the abundance of host transcripts related to jasmonic acid biosynthesis therefore altering the host defenses. In order to increase its own stability, decreases host protein degradation pathways. Its function is as follows. Indispensable for virus replication. Mediates the cap-independent, EIF4E-dependent translation of viral genomic RNAs. Binds to the cap-binding site of host EIF4E and thus interferes with the host EIF4E-dependent mRNA export and translation. VPg-RNA directly binds EIF4E and is a template for transcription. Also forms trimeric complexes with EIF4E-EIF4G, which are templates for translation. In terms of biological role, has RNA-binding and proteolytic activities. Functionally, an RNA-dependent RNA polymerase that plays an essential role in the virus replication. Its function is as follows. Involved in aphid transmission, cell-to-cell and systemis movement, encapsidation of the viral RNA and in the regulation of viral RNA amplification. The protein is Genome polyprotein of Beet mosaic virus (BtMV).